A 445-amino-acid chain; its full sequence is MSNNIQFKVQPGGTIKGRIRVPGDKSISHRSIMLGSIAEGVTQVTGFLEGDDSLATLKAFQAMGVEIEGPNQGNVTIHGVGLKGLKKPDHPLDMGNSGTAMRLMAGILAGQDFECELIGDASLSKRPMKRVTSPLADMGARIDTAEGGKPPLKIHPSSDLKGIDYTLPMASAQVKSCVLLAGLYAEGETTVIEPAPTRDHTERMLNGFGYPVQSEKLDEMQTKVTLAGGGKLTAKNIDVPSDISSAAFFMVAAAVAEEADLVIEHVGINPTRTGVIDILKLMGADITLENEATVGGEPVADVRIKSSKLKGIKIPEALVPLAIDEFPVLFVAAASAEGQTILSGAEELRVKECDRIQVMADALVAVGIDAQPTEDGMIINGGLQKAQSAEIQSHHDHRISMAMTIAGLNAVSEITIDDCANVRTSFPTFIELANTVGLNVTAVEV.

Residues Lys-25, Ser-26, and Arg-30 each coordinate 3-phosphoshikimate. Lys-25 is a binding site for phosphoenolpyruvate. Phosphoenolpyruvate is bound by residues Gly-98 and Arg-126. 3-phosphoshikimate contacts are provided by Ser-171, Gln-173, Asp-324, and Lys-351. Residue Gln-173 coordinates phosphoenolpyruvate. The Proton acceptor role is filled by Asp-324. Residues Arg-355 and Arg-398 each coordinate phosphoenolpyruvate.

This sequence belongs to the EPSP synthase family. In terms of assembly, monomer.

The protein localises to the cytoplasm. The enzyme catalyses 3-phosphoshikimate + phosphoenolpyruvate = 5-O-(1-carboxyvinyl)-3-phosphoshikimate + phosphate. The protein operates within metabolic intermediate biosynthesis; chorismate biosynthesis; chorismate from D-erythrose 4-phosphate and phosphoenolpyruvate: step 6/7. Its function is as follows. Catalyzes the transfer of the enolpyruvyl moiety of phosphoenolpyruvate (PEP) to the 5-hydroxyl of shikimate-3-phosphate (S3P) to produce enolpyruvyl shikimate-3-phosphate and inorganic phosphate. The sequence is that of 3-phosphoshikimate 1-carboxyvinyltransferase from Hydrogenovibrio crunogenus (strain DSM 25203 / XCL-2) (Thiomicrospira crunogena).